A 549-amino-acid chain; its full sequence is Solute carrier family 22 member 6 (549 aa).

Over 1-23 the chain is Cytoplasmic; that stretch reads MAFNDLLLQLGGVGRFQKIQVTL. Residues 24–44 traverse the membrane as a helical segment; it reads VILPLILLASHNTLQNFTAAI. Residues 45 to 135 lie on the Extracellular side of the membrane; that stretch reads PTHHCRPPAD…LVCSHRALRQ (91 aa). N56, N92, and N113 each carry an N-linked (GlcNAc...) asparagine glycan. The helical transmembrane segment at 136-156 threads the bilayer; that stretch reads LAQSLYMMGVLLGAMTFGCLA. Topologically, residues 157-164 are cytoplasmic; the sequence is DRLGRRKV. A helical transmembrane segment spans residues 165–185; sequence LIFNYLQTAVSGTCAAFAPNF. The Extracellular portion of the chain corresponds to 186 to 195; sequence PAYCAFRFLS. A helical transmembrane segment spans residues 196 to 216; it reads GMSTAGVVLNCMTLNVEWMPI. The Cytoplasmic portion of the chain corresponds to 217–224; the sequence is HTRAYVGT. The chain crosses the membrane as a helical span at residues 225–245; the sequence is LTGYVYSLGQFLLAGMAYAVP. Residues 246–248 lie on the Extracellular side of the membrane; it reads HWR. A helical transmembrane segment spans residues 249 to 269; the sequence is YLQLLVSAPFFAFFIYSWFFI. Topologically, residues 270-337 are cytoplasmic; sequence ESARWYASSG…ELIRCPALRR (68 aa). A helical membrane pass occupies residues 338–358; that stretch reads LFLCLSMLWFATSFAYYGLVM. Residues 359–368 lie on the Extracellular side of the membrane; it reads DLQGFGVSIY. Residues 369–389 traverse the membrane as a helical segment; that stretch reads LIQVIFGAVDLPAKLVSFLVI. The Cytoplasmic segment spans residues 390–395; sequence NNVGRR. A helical transmembrane segment spans residues 396–416; that stretch reads PAQMASLLLAGICILINGVVP. Topologically, residues 417–425 are extracellular; the sequence is KDKSIVRTS. Residues 426–446 form a helical membrane-spanning segment; that stretch reads LAVLGKGCLASSFNCIFLYTG. Residues 447–456 are Cytoplasmic-facing; that stretch reads EVYPTMIRQT. Residues 457–477 traverse the membrane as a helical segment; it reads GLGMGSTLARVGSIVSPLVSM. The Extracellular portion of the chain corresponds to 478–484; it reads TAELYPS. The helical transmembrane segment at 485-505 threads the bilayer; that stretch reads VPLFIYGAVPVAASAAIALLP. Topologically, residues 506–549 are cytoplasmic; sequence ETLGQPLPDTVQDVENRRRGKTRKQQEELQKQMVPLQASAQVKN. Residues 521-549 are disordered; it reads NRRRGKTRKQQEELQKQMVPLQASAQVKN.

It belongs to the major facilitator (TC 2.A.1) superfamily. Organic cation transporter (TC 2.A.1.19) family. Glycosylated. Glycosylation is necessary for proper targeting of the transporter to the plasma membrane.

Its subcellular location is the basolateral cell membrane. It localises to the basal cell membrane. It carries out the reaction (6R)-L-erythro-5,6,7,8-tetrahydrobiopterin(out) + a dicarboxylate(in) = (6R)-L-erythro-5,6,7,8-tetrahydrobiopterin(in) + a dicarboxylate(out). The enzyme catalyses L-erythro-7,8-dihydrobiopterin(out) + a dicarboxylate(in) = L-erythro-7,8-dihydrobiopterin(in) + a dicarboxylate(out). The catalysed reaction is L-sepiapterin(out) + a dicarboxylate(in) = L-sepiapterin(in) + a dicarboxylate(out). It catalyses the reaction prostaglandin F2alpha(out) + a dicarboxylate(in) = prostaglandin F2alpha(in) + a dicarboxylate(out). It carries out the reaction prostaglandin E2(out) + a dicarboxylate(in) = prostaglandin E2(in) + a dicarboxylate(out). The enzyme catalyses 3',5'-cyclic AMP(out) + a dicarboxylate(in) = 3',5'-cyclic AMP(in) + a dicarboxylate(out). The catalysed reaction is 3',5'-cyclic GMP(out) + a dicarboxylate(in) = 3',5'-cyclic GMP(in) + a dicarboxylate(out). It catalyses the reaction urate(out) + a dicarboxylate(in) = urate(in) + a dicarboxylate(out). It carries out the reaction kynurenate(out) + glutarate(in) = kynurenate(in) + glutarate(out). The enzyme catalyses (indol-3-yl)acetate(out) + a dicarboxylate(in) = (indol-3-yl)acetate(in) + a dicarboxylate(out). The catalysed reaction is indoxyl sulfate(out) + a dicarboxylate(in) = indoxyl sulfate(in) + a dicarboxylate(out). It catalyses the reaction N-benzoylglycine(out) + a dicarboxylate(in) = N-benzoylglycine(in) + a dicarboxylate(out). It carries out the reaction 3-carboxy-4-methyl-5-propyl-2-furanpropanoate(out) + a dicarboxylate(in) = 3-carboxy-4-methyl-5-propyl-2-furanpropanoate(in) + a dicarboxylate(out). In terms of biological role, secondary active transporter that functions as a Na(+)-independent organic anion (OA)/dicarboxylate antiporter where the uptake of one molecule of OA into the cell is coupled with an efflux of one molecule of intracellular dicarboxylate such as 2-oxoglutarate or glutarate. Mediates the uptake of OA across the basolateral side of proximal tubule epithelial cells, thereby contributing to the renal elimination of endogenous OA from the systemic circulation into the urine. Functions as a biopterin transporters involved in the uptake and the secretion of coenzymes tetrahydrobiopterin (BH4), dihydrobiopterin (BH2) and sepiapterin to urine, thereby determining baseline levels of blood biopterins. Transports prostaglandin E2 (PGE2) and prostaglandin F2-alpha (PGF2-alpha) and may contribute to their renal excretion. Also mediates the uptake of cyclic nucleotides such as cAMP and cGMP. Involved in the transport of neuroactive tryptophan metabolites kynurenate (KYNA) and xanthurenate (XA) and may contribute to their secretion from the brain. May transport glutamate. Also involved in the disposition of uremic toxins and potentially toxic xenobiotics by the renal organic anion secretory pathway, helping reduce their undesired toxicological effects on the body. Uremic toxins include the indoxyl sulfate (IS), hippurate/N-benzoylglycine (HA), indole acetate (IA), 3-carboxy-4- methyl-5-propyl-2-furanpropionate (CMPF) and urate. Xenobiotics include the mycotoxin ochratoxin (OTA). May also contribute to the transport of organic compounds in testes across the blood-testis-barrier. The polypeptide is Solute carrier family 22 member 6 (Bos taurus (Bovine)).